A 529-amino-acid chain; its full sequence is Probable serine carboxypeptidase ARB_06414 (529 aa).

The N-terminal stretch at 1–19 is a signal peptide; that stretch reads MRGLSYFVLALSAIDAAAA. Positions 171 to 191 are disordered; it reads PTDDNPSRPVGTGFSQGKPSV. The active site involves S225. Residues N284 and N377 are each glycosylated (N-linked (GlcNAc...) asparagine). The active site involves D434. N440 and N448 each carry an N-linked (GlcNAc...) asparagine glycan. The active site involves H503.

It belongs to the peptidase S10 family.

Its subcellular location is the secreted. Its function is as follows. Removes acidic, neutral and basic amino acids as well as proline from the C-terminal position. In Arthroderma benhamiae (strain ATCC MYA-4681 / CBS 112371) (Trichophyton mentagrophytes), this protein is Probable serine carboxypeptidase ARB_06414.